The chain runs to 136 residues: Sec-independent protein translocase protein TatB (136 aa).

Residues 2-22 form a helical membrane-spanning segment; it reads FGSVGWGELLVLLIVGLVVLG. The tract at residues 107 to 136 is disordered; that stretch reads VTEPAPTPIVNPELAKPAEPGPTRYDADAT.

The protein belongs to the TatB family. In terms of assembly, the Tat system comprises two distinct complexes: a TatABC complex, containing multiple copies of TatA, TatB and TatC subunits, and a separate TatA complex, containing only TatA subunits. Substrates initially bind to the TatABC complex, which probably triggers association of the separate TatA complex to form the active translocon.

It is found in the cell membrane. In terms of biological role, part of the twin-arginine translocation (Tat) system that transports large folded proteins containing a characteristic twin-arginine motif in their signal peptide across membranes. Together with TatC, TatB is part of a receptor directly interacting with Tat signal peptides. TatB may form an oligomeric binding site that transiently accommodates folded Tat precursor proteins before their translocation. The chain is Sec-independent protein translocase protein TatB from Mycobacteroides abscessus (strain ATCC 19977 / DSM 44196 / CCUG 20993 / CIP 104536 / JCM 13569 / NCTC 13031 / TMC 1543 / L948) (Mycobacterium abscessus).